Consider the following 354-residue polypeptide: MGCTLSAEDKAAVERSKMIDRNLREDGEKAAREVKLLLLGAGESGKSTIVKQMKIIHEAGYSEEECKQYKAVVYSNTIQSIIAIIRAMGRLKIDFGDSARADDARQLFVLAGAAEEGFMTAELAGVIKRLWKDSGVQACFNRSREYQLNDSAAYYLNDLDRIAQSNYIPTQQDVLRTRVKTTGIVETHFTFKDLHFKMFDVGGQRSERKKWIHCFEGVTAIIFCVALSDYDLVLAEDEEMNRMHESMKLFDSICNNKWFTDTSIILFLNKKDLFEEKIKKSPLTICYPEYTGSNTYEEAAAYIQCQFEDLNKRKDTKEIYTHFTCATDTKNVQFVFDAVTDVIIKNNLKDCGLF.

Residue G2 is the site of N-myristoyl glycine attachment. The S-palmitoyl cysteine moiety is linked to residue C3. In terms of domain architecture, G-alpha spans 32-354 (REVKLLLLGA…KNNLKDCGLF (323 aa)). The segment at 35–48 (KLLLLGAGESGKST) is G1 motif. Residues 43–48 (ESGKST), 150–151 (DS), and 175–178 (LRTR) contribute to the GTP site. Residue S47 coordinates Mg(2+). Residues 173–181 (DVLRTRVKT) form a G2 motif region. Residue T181 coordinates Mg(2+). The interval 196 to 205 (FKMFDVGGQR) is G3 motif. GTP is bound by residues 200-204 (DVGGQ), 269-272 (NKKD), and A326. A G4 motif region spans residues 265–272 (ILFLNKKD). The G5 motif stretch occupies residues 324 to 329 (TCATDT).

The protein belongs to the G-alpha family. G(i/o/t/z) subfamily. As to quaternary structure, heterotrimeric G proteins are composed of 3 units; alpha, beta and gamma. The alpha chain contains the guanine nucleotide binding site. Part of a spindle orientation complex at least composed of GNAI1, GPSM2 and NUMA1. Identified in complex with the beta subunit GNB1 and the gamma subunit GNG1. Identified in complex with the beta subunit GNB1 and the gamma subunit GNG2. Component of the TAS2R14-GNAI1 complex, consisting of TAS2R14, GNAI1, GNB1 and GNG2; within the complex interacts with TAS2R14; this complex plays a role in the perception of bitterness. GTP binding causes dissociation of the heterotrimer, liberating the individual subunits so that they can interact with downstream effector proteins. Interacts (GDP-bound form) with GPSM1; this inhibits guanine nucleotide exchange and GTP binding. Interacts (GDP-bound form) with GPSM2 (via GoLoco domains); this inhibits guanine nucleotide exchange. Interacts with RGS10; this strongly enhances GTP hydrolysis. Interacts with RGS1 and RGS16; this strongly enhances GTPase activity. Interacts with RGS4. Interacts with RGS12. Interacts (via active GTP- or inactive GDP-bound forms) with RGS14 (via RGS and GoLoco domains). Interacts with RGS3, RGS6, RGS7, RGS8, RGS17, RGS18 and RGS20 (in vitro). Interacts (GDP-bound form) with RIC8A (via C-terminus); promoting GNAI1 folding and association with the plasma membrane. Interacts (inactive GDP-bound form) with NUCB1 (via GBA motif); the interaction leads to activation of GNAI1. Interacts (inactive GDP-bound form) with CCDC88C/DAPLE (via GBA motif); the interaction leads to activation of GNAI1. Interacts (inactive GDP-bound form) with CCDC8A/GIV (via GBA motif). Post-translationally, myristoylation at Gly-2 is required for membrane anchoring before palmitoylation. Palmitoylation at Cys-3 varies with membrane lipid composition. In terms of tissue distribution, mainly expressed in the brain, lung and kidney.

It is found in the nucleus. The protein localises to the cytoplasm. The protein resides in the cell membrane. It localises to the cytoskeleton. Its subcellular location is the microtubule organizing center. It is found in the centrosome. The protein localises to the cell cortex. The protein resides in the membrane. The enzyme catalyses GTP + H2O = GDP + phosphate + H(+). Functionally, guanine nucleotide-binding proteins (G proteins) function as transducers downstream of G protein-coupled receptors (GPCRs) in numerous signaling cascades. The alpha chain contains the guanine nucleotide binding site and alternates between an active, GTP-bound state and an inactive, GDP-bound state. Signaling by an activated GPCR promotes GDP release and GTP binding. The alpha subunit has a low GTPase activity that converts bound GTP to GDP, thereby terminating the signal. Both GDP release and GTP hydrolysis are modulated by numerous regulatory proteins. Signaling is mediated via effector proteins, such as adenylate cyclase. Inhibits adenylate cyclase activity of ADCY1, ADCY5 and ADCY6, leading to decreased intracellular cAMP levels. The inactive GDP-bound form prevents the association of RGS14 with centrosomes and is required for the translocation of RGS14 from the cytoplasm to the plasma membrane. Required for normal cytokinesis during mitosis. Required for cortical dynein-dynactin complex recruitment during metaphase. In Cavia porcellus (Guinea pig), this protein is Guanine nucleotide-binding protein G(i) subunit alpha-1 (GNAI1).